Consider the following 409-residue polypeptide: Elongation factor Tu (409 aa).

In terms of domain architecture, tr-type G spans 10-214 (KPHVNIGTIG…EVDAYIPEPE (205 aa)). Residues 19–26 (GHVDHGKT) are G1. Residue 19-26 (GHVDHGKT) participates in GTP binding. Position 26 (threonine 26) interacts with Mg(2+). Residues 60-64 (GITIN) form a G2 region. The G3 stretch occupies residues 81–84 (DCPG). Residues 81-85 (DCPGH) and 136-139 (NKQD) contribute to the GTP site. Positions 136-139 (NKQD) are G4. The segment at 174–176 (SAL) is G5.

It belongs to the TRAFAC class translation factor GTPase superfamily. Classic translation factor GTPase family. EF-Tu/EF-1A subfamily. As to quaternary structure, monomer.

It localises to the cytoplasm. The catalysed reaction is GTP + H2O = GDP + phosphate + H(+). GTP hydrolase that promotes the GTP-dependent binding of aminoacyl-tRNA to the A-site of ribosomes during protein biosynthesis. In Rippkaea orientalis (strain PCC 8801 / RF-1) (Cyanothece sp. (strain PCC 8801)), this protein is Elongation factor Tu.